The primary structure comprises 302 residues: Endochitinase 2 (302 aa).

In terms of domain architecture, Chitin-binding type-1 spans 1–42; the sequence is EQCGRQAGGALCPGGLCCSQFGWCGSTADYCTVPGCQSQCSG. 7 disulfide bridges follow: Cys3–Cys18, Cys12–Cys24, Cys17–Cys31, Cys36–Cys40, Cys73–Cys136, Cys148–Cys156, and Cys255–Cys287. Glu117 acts as the Proton donor in catalysis. Residues 296–302 constitute a propeptide, removed in mature form; sequence GVSVDSM.

The protein belongs to the glycosyl hydrolase 19 family. Chitinase class I subfamily.

It catalyses the reaction Random endo-hydrolysis of N-acetyl-beta-D-glucosaminide (1-&gt;4)-beta-linkages in chitin and chitodextrins.. In terms of biological role, defense against chitin-containing fungal pathogens. The sequence is that of Endochitinase 2 from Gossypium hirsutum (Upland cotton).